Consider the following 292-residue polypeptide: Very long chain fatty acid elongase 2 (292 aa).

7 helical membrane passes run 29–49 (WFLL…LLSI), 67–87 (ILTL…VELI), 115–135 (VLWW…FFVL), 153–173 (MFNI…FFGP), 175–195 (LNSF…FPSM), 205–225 (LTQA…SAVV), and 230–250 (FPFG…ILFL). The Di-lysine motif motif lies at 289–292 (KKAQ).

The protein belongs to the ELO family. ELOVL2 subfamily. In terms of assembly, interacts with TECR. Highly expressed in testis, lower level in liver. Weakly expressed in white adipose tissue, brain and kidney.

It localises to the endoplasmic reticulum membrane. The enzyme catalyses a very-long-chain acyl-CoA + malonyl-CoA + H(+) = a very-long-chain 3-oxoacyl-CoA + CO2 + CoA. The catalysed reaction is (5Z,8Z,11Z,14Z)-eicosatetraenoyl-CoA + malonyl-CoA + H(+) = (7Z,10Z,13Z,16Z)-3-oxodocosatetraenoyl-CoA + CO2 + CoA. It carries out the reaction (7Z,10Z,13Z,16Z)-docosatetraenoyl-CoA + malonyl-CoA + H(+) = (9Z,12Z,15Z,18Z)-3-oxotetracosatetraenoyl-CoA + CO2 + CoA. It catalyses the reaction (5Z,8Z,11Z,14Z,17Z)-eicosapentaenoyl-CoA + malonyl-CoA + H(+) = 3-oxo-(7Z,10Z,13Z,16Z,19Z)-docosapentaenoyl-CoA + CO2 + CoA. The enzyme catalyses (7Z,10Z,13Z,16Z,19Z)-docosapentaenoyl-CoA + malonyl-CoA + H(+) = (9Z,12Z,15Z,18Z,21Z)-3-oxotetracosapentaenoyl-CoA + CO2 + CoA. Its pathway is lipid metabolism; polyunsaturated fatty acid biosynthesis. Its function is as follows. Catalyzes the first and rate-limiting reaction of the four reactions that constitute the long-chain fatty acids elongation cycle. This endoplasmic reticulum-bound enzymatic process allows the addition of 2 carbons to the chain of long- and very long-chain fatty acids (VLCFAs) per cycle. Condensing enzyme that catalyzes the synthesis of polyunsaturated very long chain fatty acid (C20- and C22-PUFA), acting specifically toward polyunsaturated acyl-CoA with the higher activity toward C20:4(n-6) acyl-CoA. May participate in the production of polyunsaturated VLCFAs of different chain lengths that are involved in multiple biological processes as precursors of membrane lipids and lipid mediators. Essential for the formation of C24:5(n-6) up to C30:5(n-6) PUFAs in testis, these fatty acids being indispensable for normal spermatogenesis and fertility. In Mus musculus (Mouse), this protein is Very long chain fatty acid elongase 2.